A 159-amino-acid polypeptide reads, in one-letter code: uncharacterized protein (159 aa).

3 residues coordinate a divalent metal cation: histidine 44, histidine 124, and histidine 128.

It belongs to the DinB family.

This is an uncharacterized protein from Bacillus subtilis (strain 168).